A 147-amino-acid polypeptide reads, in one-letter code: Probable 4-amino-4-deoxy-L-arabinose-phosphoundecaprenol flippase subunit ArnF (147 aa).

Residues 1 to 23 (MSNDHPQGQLPASPARSALKGYL) are Cytoplasmic-facing. Residues 24–44 (YVLGSILLVTAAQLGMKWGVI) form a helical membrane-spanning segment. Over 45–62 (QLPTWQMDLAVMLAHPLP) the chain is Periplasmic. The chain crosses the membrane as a helical span at residues 63 to 83 (LLVILAGVGCYALSLLCWLAA). Residues 84–93 (LHSTPLNIAY) are Cytoplasmic-facing. Residues 94–114 (PLLSTSYALVYLLAVNIPLFA) form a helical membrane-spanning segment. The Periplasmic segment spans residues 115-121 (EPLEPGK). Residues 122 to 142 (ALGVLFILLGAVLVGIKPAAG) form a helical membrane-spanning segment. Residues 143–147 (TKQTG) are Cytoplasmic-facing.

The protein belongs to the ArnF family. In terms of assembly, heterodimer of ArnE and ArnF.

It is found in the cell inner membrane. It functions in the pathway bacterial outer membrane biogenesis; lipopolysaccharide biosynthesis. Functionally, translocates 4-amino-4-deoxy-L-arabinose-phosphoundecaprenol (alpha-L-Ara4N-phosphoundecaprenol) from the cytoplasmic to the periplasmic side of the inner membrane. This Aeromonas hydrophila subsp. hydrophila (strain ATCC 7966 / DSM 30187 / BCRC 13018 / CCUG 14551 / JCM 1027 / KCTC 2358 / NCIMB 9240 / NCTC 8049) protein is Probable 4-amino-4-deoxy-L-arabinose-phosphoundecaprenol flippase subunit ArnF.